Reading from the N-terminus, the 398-residue chain is Organelle RRM domain-containing protein 1, chloroplastic (398 aa).

Residues 1–88 constitute a chloroplast transit peptide; that stretch reads MDTALPSVLI…RWVVVMDTPP (88 aa). The span at 54–70 shows a compositional bias: low complexity; sequence LLASSSESPPAQLAAAS. The tract at residues 54–79 is disordered; it reads LLASSSESPPAQLAAASTESQSRSSR. The 79-residue stretch at 299–377 folds into the RRM domain; the sequence is KRLFVTGLSF…WMIVVDVAKT (79 aa).

The protein resides in the plastid. It is found in the chloroplast. In terms of biological role, involved in C-to-U editing of chloroplastic RNA. Functions as major chloroplastic editing factor. Controls a majority of the chloroplastic editing sites. This Zea mays (Maize) protein is Organelle RRM domain-containing protein 1, chloroplastic (ORRM1).